We begin with the raw amino-acid sequence, 98 residues long: MTKSELIERIVTHQGLLSSKDVELAIKTMLEQMSQCLATGDRIEIRGFGSFSLHYRAPRVGRNPKTGQSVELEGKFVPHFKPGKELRDRVNEEEHEHP.

This sequence belongs to the bacterial histone-like protein family. In terms of assembly, heterodimer of an alpha and a beta chain.

Its function is as follows. This protein is one of the two subunits of integration host factor, a specific DNA-binding protein that functions in genetic recombination as well as in transcriptional and translational control. This chain is Integration host factor subunit beta, found in Pseudomonas putida (strain W619).